A 180-amino-acid chain; its full sequence is Ribulose bisphosphate carboxylase small subunit, chloroplastic (180 aa).

The transit peptide at 1–57 (MASVVASAAVVTPFAASAASTTKSSQIVSVQAGLKAGVFGGKSEWQTKTQTNGSRVS) directs the protein to the chloroplast.

It belongs to the RuBisCO small chain family. In terms of assembly, heterohexadecamer of 8 large and 8 small subunits.

It localises to the plastid. The protein localises to the chloroplast. In terms of biological role, ruBisCO catalyzes two reactions: the carboxylation of D-ribulose 1,5-bisphosphate, the primary event in carbon dioxide fixation, as well as the oxidative fragmentation of the pentose substrate. Both reactions occur simultaneously and in competition at the same active site. Although the small subunit is not catalytic it is essential for maximal activity. The polypeptide is Ribulose bisphosphate carboxylase small subunit, chloroplastic (Marchantia paleacea (Liverwort)).